Reading from the N-terminus, the 177-residue chain is Large ribosomal subunit protein uL6 (177 aa).

It belongs to the universal ribosomal protein uL6 family. In terms of assembly, part of the 50S ribosomal subunit.

In terms of biological role, this protein binds to the 23S rRNA, and is important in its secondary structure. It is located near the subunit interface in the base of the L7/L12 stalk, and near the tRNA binding site of the peptidyltransferase center. This chain is Large ribosomal subunit protein uL6, found in Rhizobium etli (strain ATCC 51251 / DSM 11541 / JCM 21823 / NBRC 15573 / CFN 42).